Here is a 93-residue protein sequence, read N- to C-terminus: Small ribosomal subunit protein uS19 (93 aa).

This sequence belongs to the universal ribosomal protein uS19 family.

Its function is as follows. Protein S19 forms a complex with S13 that binds strongly to the 16S ribosomal RNA. This Desulfitobacterium hafniense (strain Y51) protein is Small ribosomal subunit protein uS19.